Consider the following 400-residue polypeptide: Inositol polyphosphate 1-phosphatase (400 aa).

D54 is a Li(+) binding site. E79 is a Mg(2+) binding site. Li(+) is bound at residue E80. D153 and I155 together coordinate Mg(2+). 1D-myo-inositol 1,4-bisphosphate is bound by residues D156, S157, and T158. A compositionally biased stretch (polar residues) spans 238–257 (STRSNSEAQSQGTQNPSSEG). The disordered stretch occupies residues 238 to 258 (STRSNSEAQSQGTQNPSSEGS). 1D-myo-inositol 1,4-bisphosphate-binding residues include S268, K270, G290, A291, K294, and T312. Residue D317 coordinates Mg(2+). At S318 the chain carries Phosphoserine.

This sequence belongs to the inositol monophosphatase superfamily. Monomer. Mg(2+) serves as cofactor.

The enzyme catalyses 1D-myo-inositol 1,4-bisphosphate + H2O = 1D-myo-inositol 4-phosphate + phosphate. It catalyses the reaction 1D-myo-inositol 1,3,4-trisphosphate + H2O = 1D-myo-inositol 3,4-bisphosphate + phosphate. The protein operates within signal transduction; phosphatidylinositol signaling pathway. Its activity is regulated as follows. Inhibited by Li(+). Its function is as follows. Mg(2+)-dependent phosphatase that catalyzes the hydrolysis of the 1-position phosphate from inositol 1,4-bisphosphate and inositol 1,3,4-trisphosphate and participates in inositol phosphate metabolism. This chain is Inositol polyphosphate 1-phosphatase, found in Bos taurus (Bovine).